A 46-amino-acid chain; its full sequence is Large ribosomal subunit protein bL36B (46 aa).

This sequence belongs to the bacterial ribosomal protein bL36 family.

The sequence is that of Large ribosomal subunit protein bL36B from Cronobacter sakazakii (strain ATCC BAA-894) (Enterobacter sakazakii).